The sequence spans 83 residues: Keratin-associated protein 21-2 (83 aa).

In terms of assembly, interacts with hair keratins.

Functionally, in the hair cortex, hair keratin intermediate filaments are embedded in an interfilamentous matrix, consisting of hair keratin-associated proteins (KRTAP), which are essential for the formation of a rigid and resistant hair shaft through their extensive disulfide bond cross-linking with abundant cysteine residues of hair keratins. The matrix proteins include the high-sulfur and high-glycine-tyrosine keratins. The polypeptide is Keratin-associated protein 21-2 (KRTAP21-2) (Homo sapiens (Human)).